The following is a 371-amino-acid chain: Queuine tRNA-ribosyltransferase (371 aa).

D93 acts as the Proton acceptor in catalysis. Residues 93–97, D147, Q191, and G218 contribute to the substrate site; that span reads DSGGF. Residues 249-255 are RNA binding; it reads GVGTPLD. The active-site Nucleophile is D268. Residues 273–277 are RNA binding; important for wobble base 34 recognition; that stretch reads TRNAR. Zn(2+) contacts are provided by C306, C308, C311, and H337.

Belongs to the queuine tRNA-ribosyltransferase family. Homodimer. Within each dimer, one monomer is responsible for RNA recognition and catalysis, while the other monomer binds to the replacement base PreQ1. The cofactor is Zn(2+).

It carries out the reaction 7-aminomethyl-7-carbaguanine + guanosine(34) in tRNA = 7-aminomethyl-7-carbaguanosine(34) in tRNA + guanine. The protein operates within tRNA modification; tRNA-queuosine biosynthesis. Its function is as follows. Catalyzes the base-exchange of a guanine (G) residue with the queuine precursor 7-aminomethyl-7-deazaguanine (PreQ1) at position 34 (anticodon wobble position) in tRNAs with GU(N) anticodons (tRNA-Asp, -Asn, -His and -Tyr). Catalysis occurs through a double-displacement mechanism. The nucleophile active site attacks the C1' of nucleotide 34 to detach the guanine base from the RNA, forming a covalent enzyme-RNA intermediate. The proton acceptor active site deprotonates the incoming PreQ1, allowing a nucleophilic attack on the C1' of the ribose to form the product. After dissociation, two additional enzymatic reactions on the tRNA convert PreQ1 to queuine (Q), resulting in the hypermodified nucleoside queuosine (7-(((4,5-cis-dihydroxy-2-cyclopenten-1-yl)amino)methyl)-7-deazaguanosine). In Lawsonia intracellularis (strain PHE/MN1-00), this protein is Queuine tRNA-ribosyltransferase.